The following is a 156-amino-acid chain: ATP synthase subunit b (156 aa).

Residues 7–27 (LFAQMIVFFVLWWVVARFVWP) traverse the membrane as a helical segment.

This sequence belongs to the ATPase B chain family. In terms of assembly, F-type ATPases have 2 components, F(1) - the catalytic core - and F(0) - the membrane proton channel. F(1) has five subunits: alpha(3), beta(3), gamma(1), delta(1), epsilon(1). F(0) has three main subunits: a(1), b(2) and c(10-14). The alpha and beta chains form an alternating ring which encloses part of the gamma chain. F(1) is attached to F(0) by a central stalk formed by the gamma and epsilon chains, while a peripheral stalk is formed by the delta and b chains.

It localises to the cell membrane. Functionally, f(1)F(0) ATP synthase produces ATP from ADP in the presence of a proton or sodium gradient. F-type ATPases consist of two structural domains, F(1) containing the extramembraneous catalytic core and F(0) containing the membrane proton channel, linked together by a central stalk and a peripheral stalk. During catalysis, ATP synthesis in the catalytic domain of F(1) is coupled via a rotary mechanism of the central stalk subunits to proton translocation. In terms of biological role, component of the F(0) channel, it forms part of the peripheral stalk, linking F(1) to F(0). The protein is ATP synthase subunit b of Polynucleobacter asymbioticus (strain DSM 18221 / CIP 109841 / QLW-P1DMWA-1) (Polynucleobacter necessarius subsp. asymbioticus).